The chain runs to 232 residues: 7-cyano-7-deazaguanine synthase (232 aa).

8 to 18 contributes to the ATP binding site; it reads FSGGQDSTTCL. The Zn(2+) site is built by cysteine 189, cysteine 198, cysteine 201, and cysteine 204.

This sequence belongs to the QueC family. Zn(2+) is required as a cofactor.

The enzyme catalyses 7-carboxy-7-deazaguanine + NH4(+) + ATP = 7-cyano-7-deazaguanine + ADP + phosphate + H2O + H(+). Its pathway is purine metabolism; 7-cyano-7-deazaguanine biosynthesis. In terms of biological role, catalyzes the ATP-dependent conversion of 7-carboxy-7-deazaguanine (CDG) to 7-cyano-7-deazaguanine (preQ(0)). The chain is 7-cyano-7-deazaguanine synthase from Serratia proteamaculans (strain 568).